Here is a 147-residue protein sequence, read N- to C-terminus: uncharacterized protein (147 aa).

In terms of domain architecture, HTH asnC-type spans 2 to 63 (LDELDKKIIG…KLNYENIGYD (62 aa)). The segment at residues 21-40 (YREIAKELNVAVGTIYNRIK) is a DNA-binding region (H-T-H motif).

This is an uncharacterized protein from Pyrococcus abyssi (strain GE5 / Orsay).